The following is a 395-amino-acid chain: Ribosomal RNA small subunit methyltransferase H (395 aa).

S-adenosyl-L-methionine is bound by residues 101–103 (GGH), D120, Y147, D171, and Q178.

The protein belongs to the methyltransferase superfamily. RsmH family.

The protein localises to the cytoplasm. It catalyses the reaction cytidine(1402) in 16S rRNA + S-adenosyl-L-methionine = N(4)-methylcytidine(1402) in 16S rRNA + S-adenosyl-L-homocysteine + H(+). In terms of biological role, specifically methylates the N4 position of cytidine in position 1402 (C1402) of 16S rRNA. The sequence is that of Ribosomal RNA small subunit methyltransferase H from Mycobacterium marinum (strain ATCC BAA-535 / M).